A 202-amino-acid chain; its full sequence is Probable GTP-binding protein EngB (202 aa).

Residues 30-201 enclose the EngB-type G domain; the sequence is NILQIALAGR…WERIQYTIDS (172 aa). Residues 38 to 45, 65 to 69, 84 to 87, 151 to 154, and 180 to 182 contribute to the GTP site; these read GRSNVGKS, GKTRS, DLPG, TKID, and VSS. Residues serine 45 and threonine 67 each contribute to the Mg(2+) site.

The protein belongs to the TRAFAC class TrmE-Era-EngA-EngB-Septin-like GTPase superfamily. EngB GTPase family. Mg(2+) serves as cofactor.

In terms of biological role, necessary for normal cell division and for the maintenance of normal septation. This chain is Probable GTP-binding protein EngB, found in Lawsonia intracellularis (strain PHE/MN1-00).